Here is an 821-residue protein sequence, read N- to C-terminus: Serine/threonine-protein kinase CTR1 (821 aa).

Disordered regions lie at residues 1 to 76 (MEMP…LNNQ) and 481 to 502 (NPGG…PSAN). A compositionally biased stretch (low complexity) spans 14 to 25 (SQFSDDQVSVSV). A compositionally biased stretch (polar residues) spans 35 to 49 (SLSSENRSNHNSGNT). The region spanning 551-809 (LNIKEKIGAG…TIMDLLRPLI (259 aa)) is the Protein kinase domain. Residues 557-565 (IGAGSFGTV) and K578 each bind ATP. Catalysis depends on D676, which acts as the Proton acceptor.

This sequence belongs to the protein kinase superfamily. TKL Ser/Thr protein kinase family. RAF subfamily. Interacts with EIN2 (via C-terminus). As to expression, expressed in both seedlings and adult plants.

The catalysed reaction is L-seryl-[protein] + ATP = O-phospho-L-seryl-[protein] + ADP + H(+). It catalyses the reaction L-threonyl-[protein] + ATP = O-phospho-L-threonyl-[protein] + ADP + H(+). Kinase activity is inhibited by C24:1-ceramide during hypoxia (e.g. submergences). In terms of biological role, acts as a negative regulator in the ethylene response pathway. Phosphorylates the cytosolic C-terminal domain of EIN2, preventing the signaling in the absence of ethylene. Interacts with C24:1-ceramide upon hypoxic conditions (e.g. submergences) to in turn regulate EIN2 endoplasmic reticulum (ER)-to-nucleus translocation and EIN3 stabilization. This chain is Serine/threonine-protein kinase CTR1, found in Arabidopsis thaliana (Mouse-ear cress).